Consider the following 332-residue polypeptide: Protein FAM9A (332 aa).

Residues 1-13 are compositionally biased toward basic residues; it reads MEPVGRKRSRKAA. 2 disordered regions span residues 1–114 and 186–293; these read MEPV…EHTG and QKDD…PTGV. 2 stretches are compositionally biased toward basic and acidic residues: residues 74–91 and 98–114; these read GKDP…FTET and DEHG…EHTG. Positions 196–217 are enriched in low complexity; it reads AAAAAAEAAAAAEAAAAAAEVI. Residues 218–275 are compositionally biased toward acidic residues; that stretch reads VVEDEEEEEKEEEEEKEEEEEEGEEEGGGEEGEEGGGGGEGEETEEEEEEEEEEEEEE. Basic and acidic residues predominate over residues 276 to 285; sequence QIKAFQEKQK.

Belongs to the XLR/SYCP3 family. In terms of tissue distribution, expressed exclusively in testis.

The protein localises to the nucleus. It is found in the nucleolus. This Homo sapiens (Human) protein is Protein FAM9A.